Reading from the N-terminus, the 45-residue chain is Large ribosomal subunit protein bL34 (45 aa).

This sequence belongs to the bacterial ribosomal protein bL34 family.

This chain is Large ribosomal subunit protein bL34 (rpmH), found in Streptomyces coelicolor (strain ATCC BAA-471 / A3(2) / M145).